The primary structure comprises 227 residues: Translation initiation factor 6 (227 aa).

Belongs to the eIF-6 family.

In terms of biological role, binds to the 50S ribosomal subunit and prevents its association with the 30S ribosomal subunit to form the 70S initiation complex. In Pyrococcus abyssi (strain GE5 / Orsay), this protein is Translation initiation factor 6.